A 373-amino-acid chain; its full sequence is Molybdenum import ATP-binding protein ModC (373 aa).

The region spanning 4-240 (LTPPTIRAAF…PKLPLAIARD (237 aa)) is the ABC transporter domain. ATP is bound at residue 38–45 (GPSGCGKS). The Mop domain maps to 299–369 (ASSILNAIAA…IKGVALAPGR (71 aa)).

This sequence belongs to the ABC transporter superfamily. Molybdate importer (TC 3.A.1.8) family. In terms of assembly, the complex is composed of two ATP-binding proteins (ModC), two transmembrane proteins (ModB) and a solute-binding protein (ModA).

Its subcellular location is the cell inner membrane. The enzyme catalyses molybdate(out) + ATP + H2O = molybdate(in) + ADP + phosphate + H(+). In terms of biological role, part of the ABC transporter complex ModABC involved in molybdenum import. Responsible for energy coupling to the transport system. The sequence is that of Molybdenum import ATP-binding protein ModC from Rhodopseudomonas palustris (strain ATCC BAA-98 / CGA009).